A 65-amino-acid polypeptide reads, in one-letter code: Beta-toxin Am IT (65 aa).

A Pyrrolidone carboxylic acid (Glu); partial modification is found at Glu-1. The region spanning 1–64 (EHGYLLDKYT…LWNYKTNKCK (64 aa)) is the LCN-type CS-alpha/beta domain. Intrachain disulfides connect Cys-12-Cys-63, Cys-16-Cys-38, Cys-23-Cys-45, and Cys-27-Cys-47. Residue Ser-65 is modified to Serine amide.

It belongs to the long (4 C-C) scorpion toxin superfamily. Sodium channel inhibitor family. In terms of tissue distribution, expressed by the venom gland.

The protein localises to the secreted. In terms of biological role, has a toxic effect on insects and mammals. On German cockroach larvae, it provokes contraction, paralysis and lethality. Intracerebroventricular injection into mice causes severe neurotoxic symptoms. It fully competes with the binding of the iodinated Css4 (AC P60266) on rat brain synaptosomes, with moderate affinity and in a concentration-dependent manner (EC(50)=25 nM). It may act on both site 3 and site 4 of voltage-gated sodium channels. This Androctonus mauritanicus mauritanicus (Scorpion) protein is Beta-toxin Am IT.